The chain runs to 291 residues: Serine/threonine-protein phosphatase Pgam5, mitochondrial (291 aa).

A helical membrane pass occupies residues 7–23; the sequence is FACGTGAGLAAFYLQRL. Residues 59–78 are disordered; the sequence is KSLVRPQKNEQPQEQNRYNS. A compositionally biased stretch (polar residues) spans 67 to 77; sequence NEQPQEQNRYN.

This sequence belongs to the phosphoglycerate mutase family. BPG-dependent PGAM subfamily. As to quaternary structure, interacts with Pk92B/ASK1.

It is found in the mitochondrion outer membrane. It catalyses the reaction O-phospho-L-seryl-[protein] + H2O = L-seryl-[protein] + phosphate. The catalysed reaction is O-phospho-L-threonyl-[protein] + H2O = L-threonyl-[protein] + phosphate. Its function is as follows. Displays phosphatase activity for serine/threonine residues, and dephosphorylates and activates Pk92B kinase. Has apparently no phosphoglycerate mutase activity. The polypeptide is Serine/threonine-protein phosphatase Pgam5, mitochondrial (Drosophila willistoni (Fruit fly)).